Reading from the N-terminus, the 468-residue chain is UDP-N-acetylmuramoyl-L-alanine--L-glutamate ligase (468 aa).

122-128 (GTKGKST) provides a ligand contact to ATP.

Belongs to the MurCDEF family. MurD2 subfamily.

The protein resides in the cytoplasm. The enzyme catalyses UDP-N-acetyl-alpha-D-muramoyl-L-alanine + L-glutamate + ATP = UDP-N-acetyl-alpha-D-muramoyl-L-alanyl-L-glutamate + ADP + phosphate + H(+). It participates in cell wall biogenesis; peptidoglycan biosynthesis. Its function is as follows. Cell wall formation. Catalyzes the addition of L-glutamate to the nucleotide precursor UDP-N-acetylmuramoyl-L-alanine. The chain is UDP-N-acetylmuramoyl-L-alanine--L-glutamate ligase from Xylella fastidiosa (strain 9a5c).